A 128-amino-acid polypeptide reads, in one-letter code: Putative protein SEM1, isoform 2 (128 aa).

The segment covering 22–32 has biased composition (basic residues); the sequence is KHGIKRGRRPS. A disordered region spans residues 22–42; the sequence is KHGIKRGRRPSIRSPAQRARG.

This is Putative protein SEM1, isoform 2 from Homo sapiens (Human).